The sequence spans 389 residues: Tyrosinase-like protein phomQ1 (389 aa).

A helical membrane pass occupies residues 53–73 (TIIVVSVITFAAIIGCWVFLS). Cu cation contacts are provided by histidine 141 and histidine 150. Residue asparagine 220 is glycosylated (N-linked (GlcNAc...) asparagine). Cu cation-binding residues include histidine 290 and histidine 316.

The protein belongs to the tyrosinase family. Cu(2+) serves as cofactor.

The protein resides in the membrane. Its pathway is mycotoxin biosynthesis. Its function is as follows. Tyrosinase-like protein; part of the gene cluster that mediates the biosynthesis of the phomopsins, a group of hexapeptide mycotoxins which infects lupins and causes lupinosis disease in livestock. Within the pathway, phomQ1 functions as a halogenase, converting. The pathway starts with the processing of the precursor phomA by several endopeptidases including kexin proteases as well as the cluster-specific S41 family peptidase phomP1 and the oligopeptidase phomG to produce 10 identical copies of the hexapeptide Tyr-Val-Ile-Pro-Ile-Asp. After being excised from the precursor peptide, the core peptides are cyclized and modified post-translationally by enzymes encoded within the gene cluster. The timing and order of proteolysis of the phomA precursor and PTMs are still unknown. Two tyrosinase-like enzymes, phomQ1 and phomQ2, catalyze the chlorination and hydroxylation of Tyr, respectively. PhomYb, is proposed to be involved in the construction of the macrocyclic structure. The other 4 ustYa family proteins may be involved in PTMs that generate the unique structure of phomopsin A. PhomYa is required for the hydroxylation of C-beta of Tyr. PhomYc, phomYd, and phomYe are responsible for the biosynthesis of 2,3-dehydroisoleucine (dIle), 2,3-dehydroaspartic acid (dAsp), and 3,4-dehydroproline (dPro), respectively. While dIle formation by phomYc is indispensable for the installation of dAsp by phomYd, the order of the other PTMs have not been elucidated yet. Most of the biosynthetic enzymes likely have broad substrate specificity, and thus, there might be a metabolic grid from a precursor to phomopsin A. The enzyme(s) responsible for the biosynthesis of 3,4-dehydrovaline (dVal) have also not been identified yet. Finally, phomM acts as an S-adenosylmethionine-dependent alpha-N-methyltransferase that catalyzes two successive N-methylation reactions, converting N-desmethyl-phomopsin A to phomopsin A and phomopsin A further to an N,N-dimethylated congener called phomopsin E. The chain is Tyrosinase-like protein phomQ1 from Diaporthe leptostromiformis (Lupinosis disease fungus).